The sequence spans 1242 residues: ATP-dependent helicase/nuclease subunit A (1242 aa).

The 476-residue stretch at 12–487 (SRWTDEQWKA…IDLASNFRSR (476 aa)) folds into the UvrD-like helicase ATP-binding domain. 33 to 40 (AAAGSGKT) lines the ATP pocket. In terms of domain architecture, UvrD-like helicase C-terminal spans 514–808 (AAQLKYGADY…RVMTIHSSKG (295 aa)).

It belongs to the helicase family. AddA subfamily. In terms of assembly, heterodimer of AddA and AddB/RexB. Requires Mg(2+) as cofactor.

It carries out the reaction Couples ATP hydrolysis with the unwinding of duplex DNA by translocating in the 3'-5' direction.. The catalysed reaction is ATP + H2O = ADP + phosphate + H(+). The heterodimer acts as both an ATP-dependent DNA helicase and an ATP-dependent, dual-direction single-stranded exonuclease. Recognizes the chi site generating a DNA molecule suitable for the initiation of homologous recombination. The AddA nuclease domain is required for chi fragment generation; this subunit has the helicase and 3' -&gt; 5' nuclease activities. This Geobacillus thermodenitrificans (strain NG80-2) protein is ATP-dependent helicase/nuclease subunit A.